A 431-amino-acid chain; its full sequence is Isochorismate synthase MenF (431 aa).

K183 acts as the Proton acceptor in catalysis. E233 functions as the Proton donor in the catalytic mechanism. Mg(2+) is bound by residues E277 and E414.

Belongs to the isochorismate synthase family. Mg(2+) is required as a cofactor.

The enzyme catalyses chorismate = isochorismate. Its pathway is quinol/quinone metabolism; 1,4-dihydroxy-2-naphthoate biosynthesis; 1,4-dihydroxy-2-naphthoate from chorismate: step 1/7. The protein operates within quinol/quinone metabolism; menaquinone biosynthesis. Catalyzes the conversion of chorismate to isochorismate. This chain is Isochorismate synthase MenF, found in Pasteurella multocida (strain Pm70).